A 447-amino-acid chain; its full sequence is Acid phosphatase (447 aa).

The N-terminal stretch at 1 to 17 (MKPSVATLLATVSLVYA) is a signal peptide. 5 N-linked (GlcNAc...) asparagine glycosylation sites follow: asparagine 119, asparagine 150, asparagine 177, asparagine 186, and asparagine 208. Aspartate 215 functions as the Proton donor in the catalytic mechanism. N-linked (GlcNAc...) asparagine glycosylation is found at asparagine 217, asparagine 234, asparagine 240, asparagine 315, asparagine 332, asparagine 382, and asparagine 405. Residue serine 419 is the site of GPI-like-anchor amidated serine attachment. Residues 420–447 (ASSNAAVSAVAPAAGVSGLLLGLALNLL) constitute a propeptide, removed in mature form.

In terms of processing, the GPI-like anchor contains a phosphoceramide lipid group. The anchor position has not been determined.

The protein resides in the cell membrane. The catalysed reaction is a phosphate monoester + H2O = an alcohol + phosphate. Its activity is regulated as follows. Inhibited by NaF, molybdate and vanadate. Has both phosphomonoesterase and phosphodiesterase activity. Cleaves a broad range of phosphate esters. The protein is Acid phosphatase (phoA) of Aspergillus fumigatus (strain ATCC MYA-4609 / CBS 101355 / FGSC A1100 / Af293) (Neosartorya fumigata).